The chain runs to 558 residues: MLEFAVSAPFDPAFDISSSIVPATFPWLSLSILFPIVGAFIVPFVPDDGDGKQVRWFALGIALTTFLITAAAYLTGYDPSYSGLQLSERVSWLPNLGLTWAVGADGLSMPLILLTSFITALAVLAAWPVTFKPKLFFFLILAMDGGQIAVFAVQDMLLFFLAWELELLPVYLLLAIWGGKKRQYAATKFILYTAGSSLFILLAALAMGFFGGGVPNFEYSVLAQKGFSTGFELLCYAGLLIAFGVKLPIVPLHTWLPDAHGEATAPVHMLLAGILLKMGGYALMRFNAEILPVAHAQFAPLLVVLGVVNIIYAALTSFAQRNLKRKIAYSSISHMGFVLIGIGSFSELGTSGAMLQMISHGLIGASLFFLVGATYDRTHTLQLDEMGGIGQKMRIMFALWTVCCLASLALPGMSGFVSELMVFAGFATDEAYTLSFRIVIDGLAAIGVILTPIYLLSMLREIFFGKENSELVSHSNLVDSEPREVYIIGCLLVPIIGIGLYPKLMTDSYSNTISALVRRDVDAMERITRPTAPLIRSTSLVPAVFSAPKLTQASQPVS.

Transmembrane regions (helical) follow at residues phenylalanine 25–valine 45, tryptophan 56–glycine 76, valine 90–proline 110, leucine 111–phenylalanine 131, proline 133–valine 153, leucine 157–tryptophan 177, phenylalanine 189–phenylalanine 209, glycine 230–valine 250, threonine 264–methionine 284, phenylalanine 298–phenylalanine 318, isoleucine 327–glutamate 347, alanine 353–alanine 373, phenylalanine 397–valine 417, isoleucine 438–methionine 458, and valine 485–methionine 505.

This sequence belongs to the complex I subunit 4 family.

The protein resides in the cellular thylakoid membrane. It carries out the reaction a plastoquinone + NADH + (n+1) H(+)(in) = a plastoquinol + NAD(+) + n H(+)(out). It catalyses the reaction a plastoquinone + NADPH + (n+1) H(+)(in) = a plastoquinol + NADP(+) + n H(+)(out). In terms of biological role, NDH-1 shuttles electrons from NAD(P)H, via FMN and iron-sulfur (Fe-S) centers, to quinones in the respiratory chain. The immediate electron acceptor for the enzyme in this species is believed to be plastoquinone. Couples the redox reaction to proton translocation (for every two electrons transferred, four hydrogen ions are translocated across the cytoplasmic membrane), and thus conserves the redox energy in a proton gradient. The chain is NAD(P)H-quinone oxidoreductase chain 4 from Synechococcus sp. (strain CC9311).